Here is a 324-residue protein sequence, read N- to C-terminus: Leucine carboxyl methyltransferase 1 (324 aa).

Residues Arg-74, Gly-101, Asp-128, 172–173, and Glu-196 contribute to the S-adenosyl-L-methionine site; that span reads DL.

Belongs to the methyltransferase superfamily. LCMT family.

It catalyses the reaction [phosphatase 2A protein]-C-terminal L-leucine + S-adenosyl-L-methionine = [phosphatase 2A protein]-C-terminal L-leucine methyl ester + S-adenosyl-L-homocysteine. Functionally, methylates the carboxyl group of the C-terminal leucine residue of protein phosphatase 2A catalytic subunits to form alpha-leucine ester residues. The chain is Leucine carboxyl methyltransferase 1 (PPM1) from Yarrowia lipolytica (strain CLIB 122 / E 150) (Yeast).